A 119-amino-acid chain; its full sequence is Beta-2-microglobulin (119 aa).

A signal peptide spans methionine 1 to alanine 20. The Ig-like C1-type domain occupies proline 25–lysine 114. A disulfide bridge links cysteine 45 with cysteine 100.

Belongs to the beta-2-microglobulin family. As to quaternary structure, heterodimer of an alpha chain and a beta chain. Beta-2-microglobulin is the beta-chain of major histocompatibility complex class I molecules.

The protein localises to the secreted. In terms of biological role, component of the class I major histocompatibility complex (MHC). Involved in the presentation of peptide antigens to the immune system. In Macaca fascicularis (Crab-eating macaque), this protein is Beta-2-microglobulin (B2M).